A 440-amino-acid chain; its full sequence is MSYSLYLAFLCLSLLTQRTCIQGNQVNVEVSRSDKLSLPGFENLTAGYNKFLRPNFGGDPVRIALTLDIASISSISESNMDYTATIYLRQRWTDPRLVFEGNKSFTLDARLVEFLWVPDTYIVESKKSFLHEVTVGNRLIRLFSNGTVLYALRITTTVTCNMDLSKYPMDTQTCKLQLESWGYDGNDVEFSWLRGNDSVRGLENLRLAQYTIQQYFTLVTVSQQETGNYTRLVLQFELRRNVLYFILETYVPSTFLVVLSWVSFWISLDSVPARTCIGVTTVLSMTTLMIGSRTSLPNTNCFIKAIDVYLGICFSFVFGALLEYAVAHYSSLQQMAVKDRGPAKDSEEVNITNIINSSISSFKRKISFASIEISGDNVNYSDLTMKASDKFKFVFREKISRIIDYFTIQNPSNVDRYSKLLFPLIFMLANVFYWAYYMYF.

Residues 1-23 (MSYSLYLAFLCLSLLTQRTCIQG) form the signal peptide. Over 24–241 (NQVNVEVSRS…LVLQFELRRN (218 aa)) the chain is Extracellular. N-linked (GlcNAc...) asparagine glycans are attached at residues N43, N102, and N145. An intrachain disulfide couples C160 to C174. N-linked (GlcNAc...) asparagine glycans are attached at residues N196 and N228. Residues 242 to 262 (VLYFILETYVPSTFLVVLSWV) form a helical membrane-spanning segment. The Cytoplasmic portion of the chain corresponds to 263–270 (SFWISLDS). A helical membrane pass occupies residues 271 to 290 (VPARTCIGVTTVLSMTTLMI). Residues 291–301 (GSRTSLPNTNC) are Extracellular-facing. Residues 302-322 (FIKAIDVYLGICFSFVFGALL) traverse the membrane as a helical segment. Topologically, residues 323 to 419 (EYAVAHYSSL…NPSNVDRYSK (97 aa)) are cytoplasmic. A helical transmembrane segment spans residues 420–440 (LLFPLIFMLANVFYWAYYMYF).

Belongs to the ligand-gated ion channel (TC 1.A.9) family. Gamma-aminobutyric acid receptor (TC 1.A.9.5) subfamily. GABRP sub-subfamily. In terms of assembly, heteropentamer, formed by a combination of alpha (GABRA1-6), beta (GABRB1-3), gamma (GABRG1-3), delta (GABRD), epsilon (GABRE), rho (GABRR1-3), pi (GABRP) and theta (GABRQ) chains, each subunit exhibiting distinct physiological and pharmacological properties.

Its subcellular location is the cell membrane. It is found in the apical cell membrane. The catalysed reaction is chloride(in) = chloride(out). Functionally, pi subunit of the heteropentameric ligand-gated chloride channel gated by gamma-aminobutyric acid (GABA). GABA-gated chloride channels, also named GABA(A) receptors (GABAAR), consist of five subunits arranged around a central pore and contain GABA active binding site(s) located at the alpha and beta subunit interfaces. When activated by GABA, GABAARs selectively allow the flow of chloride anions across the cell membrane down their electrochemical gradient. Pi-containing GABAARs are mostly located in peripheral tissues. In the uterus, pi subunits modulate uterus contraction by altering the sensitivity of GABAARs to pregnanolone. In the lungs, pi-containing GABAARs contribute to pulmonary fluid transport via luminal secretion of chloride. This is Gamma-aminobutyric acid receptor subunit pi from Mus musculus (Mouse).